A 466-amino-acid chain; its full sequence is MAKTLYQKLFDAHVVHEAPNETPLLYIDRHLVHEVTSPQAFDGLRAHGRPVRQPRKTFATMDHNVSTQTKDINASGEMARIQMQELIKNCNEFGVELYDLNHPYQGIVHVMGPEQGITLPGMTIVCGDSHTATHGAFGALAFGIGTSEVEHVLATQTLKQGRAKTMKIEVNGRAAPGITAKDIVLAIIGKTGSAGGTGYVVEFCGDAIRALSMEGRMTLCNMAIEMGAKAGLVAPDETTFNYVKGRLHAPKGQDFDEAVAYWKTLKTDDGAQFDAVVTLNAEEIAPQVTWGTNPGQVIAVSDAIPDPASFADPVERASAEKALAYMGLKPGVPLTDVAIDKVFIGSCTNSRIEDLRAAAEIARGRKVAPGVQALVVPGSGPVKAQAEAEGLDKIFIEAGFEWRLPGCSMCLAMNNDRLNPGERCASTSNRNFEGRQGRGGRTHLVSPAMAAAAAVTGRFADIRSLK.

Residues cysteine 347, cysteine 407, and cysteine 410 each coordinate [4Fe-4S] cluster.

This sequence belongs to the aconitase/IPM isomerase family. LeuC type 1 subfamily. As to quaternary structure, heterodimer of LeuC and LeuD. [4Fe-4S] cluster serves as cofactor.

It carries out the reaction (2R,3S)-3-isopropylmalate = (2S)-2-isopropylmalate. Its pathway is amino-acid biosynthesis; L-leucine biosynthesis; L-leucine from 3-methyl-2-oxobutanoate: step 2/4. In terms of biological role, catalyzes the isomerization between 2-isopropylmalate and 3-isopropylmalate, via the formation of 2-isopropylmaleate. The protein is 3-isopropylmalate dehydratase large subunit of Cronobacter sakazakii (strain ATCC BAA-894) (Enterobacter sakazakii).